We begin with the raw amino-acid sequence, 418 residues long: Tyrosine--tRNA ligase (418 aa).

Y34 is a binding site for L-tyrosine. The 'HIGH' region motif lies at 39–48 (PTADSLHLGH). 2 residues coordinate L-tyrosine: Y169 and Q173. The short motif at 229–233 (KFGKS) is the 'KMSKS' region element. K232 lines the ATP pocket. Positions 352–418 (LNIVDLLVTA…GKKKYFVLTY (67 aa)) constitute an S4 RNA-binding domain.

The protein belongs to the class-I aminoacyl-tRNA synthetase family. TyrS type 1 subfamily. In terms of assembly, homodimer.

Its subcellular location is the cytoplasm. The enzyme catalyses tRNA(Tyr) + L-tyrosine + ATP = L-tyrosyl-tRNA(Tyr) + AMP + diphosphate + H(+). In terms of biological role, catalyzes the attachment of tyrosine to tRNA(Tyr) in a two-step reaction: tyrosine is first activated by ATP to form Tyr-AMP and then transferred to the acceptor end of tRNA(Tyr). This Streptococcus gordonii (strain Challis / ATCC 35105 / BCRC 15272 / CH1 / DL1 / V288) protein is Tyrosine--tRNA ligase.